The chain runs to 520 residues: MVYSTNILLAIVTILTGVFIWSRRTYVYWQRRRVKFVQPTHLLGNLSRVLRLEESFALQLRRFYFDERFRNEPVVGIYLFHQPALLIRDLQLVRTVLVEDFVSFSNRFAKCDGRSDKMGALSLFLAKQPEWREIRTRLAPAFAGAKLKQMFSLMEEIGCDLEWYLKRLTRDLRRGDAERGAIVSIKDVCDLYNTDMIASIAFGLRSYSLRNTQSEIGSHCQDLFRPNVRRIIDLFVIFYLPKLVPLLRPKLFTEPHAEFLRRVIQLVIEERERGGDLRNDLIEMLLTLKKEADLQQDKSHFTHHRDFLAAQAASFEVAGIETCSASMSFALYELAKQPLMQSRLRREIREAFASNPNGRLTYEAVARMEFLDMVVEETLRKYPIVPLLERECTPINKKRFYSLRPHAECYTRRGMPVFISNLAIHHDPKYWPDPDRFDPERFSAANKALQAPMSYMPFGAGPRNCIGMQIGLLQIKLGLVYFLHQHRVEICDRTVERIQFDAKFALLASEQRIYLKVDCL.

Residue cysteine 465 participates in heme binding.

The protein belongs to the cytochrome P450 family. The cofactor is heme.

The protein resides in the endoplasmic reticulum membrane. It is found in the microsome membrane. In terms of biological role, may be involved in the metabolism of insect hormones and in the breakdown of synthetic insecticides. This chain is Probable cytochrome P450 6v1 (Cyp6v1), found in Drosophila melanogaster (Fruit fly).